We begin with the raw amino-acid sequence, 604 residues long: Prostaglandin G/H synthase 2 (604 aa).

The first 17 residues, 1–17 (MLARALLLCAAVALSGA), serve as a signal peptide directing secretion. Residues 18-55 (ANPCCSHPCQNRGVCMSVGFDQYKCDCTRTGFYGENCT) form the EGF-like domain. 4 disulfides stabilise this stretch: cysteine 21/cysteine 32, cysteine 22/cysteine 145, cysteine 26/cysteine 42, and cysteine 44/cysteine 54. N-linked (GlcNAc...) asparagine glycosylation is present at asparagine 53. Arginine 106 provides a ligand contact to substrate. A glycan (N-linked (GlcNAc...) asparagine) is linked at asparagine 130. Residue histidine 193 is the Proton acceptor of the active site. Residue tyrosine 341 participates in substrate binding. Residue tyrosine 371 is the For cyclooxygenase activity of the active site. Heme b is bound at residue histidine 374. The N-linked (GlcNAc...) asparagine glycan is linked to asparagine 396. Cysteine 526 carries the S-nitrosocysteine modification. A disulfide bond links cysteine 555 and cysteine 561. Serine 565 is subject to O-acetylserine. Asparagine 580 carries N-linked (GlcNAc...) asparagine glycosylation.

The protein belongs to the prostaglandin G/H synthase family. In terms of assembly, homodimer. Heme b serves as cofactor. In terms of processing, S-nitrosylation by NOS2 (iNOS) activates enzyme activity. S-nitrosylation may take place on different Cys residues in addition to Cys-526. Acetylated at Ser-565 by SPHK1. During neuroinflammation, acetylation by SPHK1 promotes neuronal secretion of specialized preresolving mediators (SPMs), especially 15-R-lipoxin A4, which results in an increase of phagocytic microglia.

The protein localises to the microsome membrane. It is found in the endoplasmic reticulum membrane. It localises to the nucleus inner membrane. Its subcellular location is the nucleus outer membrane. The catalysed reaction is (5Z,8Z,11Z,14Z)-eicosatetraenoate + AH2 + 2 O2 = prostaglandin H2 + A + H2O. It carries out the reaction (5Z,8Z,11Z,14Z)-eicosatetraenoate + 2 O2 = prostaglandin G2. The enzyme catalyses prostaglandin G2 + AH2 = prostaglandin H2 + A + H2O. It catalyses the reaction (5Z,8Z,11Z,14Z,17Z)-eicosapentaenoate + 2 O2 = prostaglandin G3. The catalysed reaction is prostaglandin G3 + AH2 = prostaglandin H3 + A + H2O. It carries out the reaction (8Z,11Z,14Z)-eicosatrienoate + 2 O2 = prostaglandin G1. The enzyme catalyses prostaglandin G1 + AH2 = prostaglandin H1 + A + H2O. It catalyses the reaction 2-(5Z,8Z,11Z,14Z)-eicosatetraenoyl-sn-glycero-3-phosphoethanolamine + 2 O2 = 2-(prostaglandin G2)-sn-glycero-3-phosphoethanolamine. The catalysed reaction is 2-(prostaglandin G2)-sn-glycero-3-phosphoethanolamine + AH2 = 2-(prostaglandin H2)-sn-glycero-3-phosphoethanolamine + A + H2O. It carries out the reaction 2-(5Z,8Z,11Z,14Z)-eicosatetraenoyl-sn-glycero-3-phosphocholine + 2 O2 = 2-(prostaglandin G2)-sn-glycero-3-phosphocholine. The enzyme catalyses 2-(prostaglandin G2)-sn-glycero-3-phosphocholine + AH2 = 2-(prostaglandin H2)-sn-glycero-3-phosphocholine + A + H2O. It catalyses the reaction (15S)-hydroperoxy-(5Z,8Z,11Z,13E)-eicosatetraenoate + AH2 = (15S)-hydroxy-(5Z,8Z,11Z,13E)-eicosatetraenoate + A + H2O. The catalysed reaction is 2-(5Z,8Z,11Z,14Z)-eicosatetraenoyl-sn-glycero-3-phosphocholine + AH2 + O2 = 2-[(15S)-hydroxy-(5Z,8Z,11Z,13E)-eicosatetraenoyl]-sn-glycero-3-phosphocholine + A + H2O. It carries out the reaction 2-(5Z,8Z,11Z,14Z)-eicosatetraenoyl-sn-glycero-3-phosphocholine + AH2 + O2 = 2-[(15R)-hydroxy-(5Z,8Z,11Z,13E)-eicosatetraenoyl]-sn-glycero-3-phosphocholine + A + H2O. The enzyme catalyses 2-(5Z,8Z,11Z,14Z)-eicosatetraenoyl-sn-glycero-3-phosphocholine + AH2 + O2 = 2-[(11R)-hydroxy-(5Z,8Z,12E,14Z)-eicosatetraenoyl]-sn-glycero-3-phosphocholine + A + H2O. It catalyses the reaction (9Z,12Z)-octadecadienoate + AH2 + O2 = 9-hydroxy-(10E,12Z)-octadecadienoate + A + H2O. The catalysed reaction is (9Z,12Z)-octadecadienoate + AH2 + O2 = 13-hydroxy-(9Z,11E)-octadecadienoate + A + H2O. It carries out the reaction (5Z,8Z,11Z,14Z)-eicosatetraenoate + AH2 + O2 = (15R)-hydroxy-(5Z,8Z,11Z,13E)-eicosatetraenoate + A + H2O. The enzyme catalyses (5Z,8Z,11Z,14Z)-eicosatetraenoate + AH2 + O2 = (11R)-hydroxy-(5Z,8Z,12E,14Z)-eicosatetraenoate + A + H2O. It catalyses the reaction (5Z,8Z,11Z,14Z,17Z)-eicosapentaenoate + AH2 + O2 = (11R)-hydroxy-(5Z,8Z,12E,14Z,17Z)-eicosapentaenoate + A + H2O. The catalysed reaction is (5Z,8Z,11Z,14Z,17Z)-eicosapentaenoate + AH2 + O2 = (18S)-hydroxy-(5Z,8Z,11Z,14Z,16E)-eicosapentaenoate + A + H2O. It carries out the reaction (5Z,8Z,11Z,14Z,17Z)-eicosapentaenoate + AH2 + O2 = (18R)-hydroxy-(5Z,8Z,11Z,14Z,16E)-eicosapentaenoate + A + H2O. The enzyme catalyses (5Z,8Z,11Z,14Z,17Z)-eicosapentaenoate + AH2 + O2 = (15R)-hydroxy-(5Z,8Z,11Z,13E,17Z)-eicosapentaenoate + A + H2O. It catalyses the reaction (5Z,8Z,11Z,14Z,17Z)-eicosapentaenoate + AH2 + O2 = (15S)-hydroxy-(5Z,8Z,11Z,13E,17Z)-eicosapentaenoate + A + H2O. The catalysed reaction is (7Z,10Z,13Z,16Z,19Z)-docosapentaenoate + AH2 + O2 = 13R-hydroxy-(7Z,10Z,14E,16Z,19Z)-docosapentaenoate + A + H2O. It carries out the reaction (4Z,7Z,10Z,13Z,16Z,19Z)-docosahexaenoate + AH2 + O2 = 13-hydroxy-(4Z,7Z,10Z,14E,16Z,19Z)-docosahexaenoate + A + H2O. The enzyme catalyses (5S)-hydroxy-(6E,8Z,11Z,14Z)-eicosatetraenoate + AH2 + O2 = (5S,15R)-dihydroxy-(6E,8Z,11Z,13E)-eicosatetraenoate + A + H2O. It catalyses the reaction (4Z,7Z,10Z,13Z,16Z,19Z)-docosahexaenoate + AH2 + O2 = 17R-hydroxy-(4Z,7Z,10Z,13Z,15E,19Z)-docosahexaenoate + A + H2O. The catalysed reaction is (5S)-hydroxy-(6E,8Z,11Z,14Z)-eicosatetraenoate + AH2 + O2 = (5S,15S)-dihydroxy-(6E,8Z,11Z,13E)-eicosatetraenoate + A + H2O. It carries out the reaction (5S)-hydroxy-(6E,8Z,11Z,14Z)-eicosatetraenoate + AH2 + O2 = (5S,11R)-dihydroxy-(6E,8Z,12E,14Z)-eicosatetraenoate + A + H2O. The enzyme catalyses 2-(5Z,8Z,11Z,14Z-eicosatetraenoyl)-glycerol + 2 O2 = 2-glyceryl-prostaglandin G2. It catalyses the reaction 2-glyceryl-prostaglandin G2 + AH2 = 2-glyceryl-prostaglandin H2 + A + H2O. The catalysed reaction is (5Z,8Z,11Z,14Z)-eicosatetraenoate + O2 = (15R)-hydroperoxy-(5Z,8Z,11Z,13E)-eicosatetraenoate. It carries out the reaction (5Z,8Z,11Z,14Z)-eicosatetraenoate + O2 = 11R-hydroperoxy-(5Z,8Z,12E,14Z)-eicosatetraenoate. The enzyme catalyses (9Z,12Z)-octadecadienoate + AH2 + O2 = (9R)-hydroxy-(10E,12Z)-octadecadienoate + A + H2O. It catalyses the reaction (9Z,12Z)-octadecadienoate + AH2 + O2 = (9S)-hydroxy-(10E,12Z)-octadecadienoate + A + H2O. The catalysed reaction is (9Z,12Z)-octadecadienoate + AH2 + O2 = (13S)-hydroxy-(9Z,11E)-octadecadienoate + A + H2O. It carries out the reaction (9Z,12Z)-octadecadienoate + AH2 + O2 = (13R)-hydroxy-(9Z,11E)-octadecadienoate + A + H2O. It functions in the pathway lipid metabolism; prostaglandin biosynthesis. In terms of biological role, dual cyclooxygenase and peroxidase in the biosynthesis pathway of prostanoids, a class of C20 oxylipins mainly derived from arachidonate ((5Z,8Z,11Z,14Z)-eicosatetraenoate, AA, C20:4(n-6)), with a particular role in the inflammatory response. The cyclooxygenase activity oxygenates AA to the hydroperoxy endoperoxide prostaglandin G2 (PGG2), and the peroxidase activity reduces PGG2 to the hydroxy endoperoxide prostaglandin H2 (PGH2), the precursor of all 2-series prostaglandins and thromboxanes. This complex transformation is initiated by abstraction of hydrogen at carbon 13 (with S-stereochemistry), followed by insertion of molecular O2 to form the endoperoxide bridge between carbon 9 and 11 that defines prostaglandins. The insertion of a second molecule of O2 (bis-oxygenase activity) yields a hydroperoxy group in PGG2 that is then reduced to PGH2 by two electrons. Similarly catalyzes successive cyclooxygenation and peroxidation of dihomo-gamma-linoleate (DGLA, C20:3(n-6)) and eicosapentaenoate (EPA, C20:5(n-3)) to corresponding PGH1 and PGH3, the precursors of 1- and 3-series prostaglandins. In an alternative pathway of prostanoid biosynthesis, converts 2-arachidonoyl lysophopholipids to prostanoid lysophopholipids, which are then hydrolyzed by intracellular phospholipases to release free prostanoids. Metabolizes 2-arachidonoyl glycerol yielding the glyceryl ester of PGH2, a process that can contribute to pain response. Generates lipid mediators from n-3 and n-6 polyunsaturated fatty acids (PUFAs) via a lipoxygenase-type mechanism. Oxygenates PUFAs to hydroperoxy compounds and then reduces them to corresponding alcohols. Plays a role in the generation of resolution phase interaction products (resolvins) during both sterile and infectious inflammation. Metabolizes docosahexaenoate (DHA, C22:6(n-3)) to 17R-HDHA, a precursor of the D-series resolvins (RvDs). As a component of the biosynthetic pathway of E-series resolvins (RvEs), converts eicosapentaenoate (EPA, C20:5(n-3)) primarily to 18S-HEPE that is further metabolized by ALOX5 and LTA4H to generate 18S-RvE1 and 18S-RvE2. In vascular endothelial cells, converts docosapentaenoate (DPA, C22:5(n-3)) to 13R-HDPA, a precursor for 13-series resolvins (RvTs) shown to activate macrophage phagocytosis during bacterial infection. In activated leukocytes, contributes to oxygenation of hydroxyeicosatetraenoates (HETE) to diHETES (5,15-diHETE and 5,11-diHETE). Can also use linoleate (LA, (9Z,12Z)-octadecadienoate, C18:2(n-6)) as substrate and produce hydroxyoctadecadienoates (HODEs) in a regio- and stereospecific manner, being (9R)-HODE ((9R)-hydroxy-(10E,12Z)-octadecadienoate) and (13S)-HODE ((13S)-hydroxy-(9Z,11E)-octadecadienoate) its major products. During neuroinflammation, plays a role in neuronal secretion of specialized preresolving mediators (SPMs) 15R-lipoxin A4 that regulates phagocytic microglia. The polypeptide is Prostaglandin G/H synthase 2 (PTGS2) (Bos taurus (Bovine)).